The chain runs to 417 residues: NADH-quinone oxidoreductase subunit D (417 aa).

The protein belongs to the complex I 49 kDa subunit family. In terms of assembly, NDH-1 is composed of 14 different subunits. Subunits NuoB, C, D, E, F, and G constitute the peripheral sector of the complex.

The protein resides in the cell inner membrane. The enzyme catalyses a quinone + NADH + 5 H(+)(in) = a quinol + NAD(+) + 4 H(+)(out). Its function is as follows. NDH-1 shuttles electrons from NADH, via FMN and iron-sulfur (Fe-S) centers, to quinones in the respiratory chain. The immediate electron acceptor for the enzyme in this species is believed to be ubiquinone. Couples the redox reaction to proton translocation (for every two electrons transferred, four hydrogen ions are translocated across the cytoplasmic membrane), and thus conserves the redox energy in a proton gradient. In Methylobacillus flagellatus (strain ATCC 51484 / DSM 6875 / VKM B-1610 / KT), this protein is NADH-quinone oxidoreductase subunit D.